A 48-amino-acid polypeptide reads, in one-letter code: Large ribosomal subunit protein bL33B (48 aa).

The protein belongs to the bacterial ribosomal protein bL33 family.

The protein is Large ribosomal subunit protein bL33B (rpmG2) of Mycoplasma genitalium (strain ATCC 33530 / DSM 19775 / NCTC 10195 / G37) (Mycoplasmoides genitalium).